Reading from the N-terminus, the 207-residue chain is LexA repressor (207 aa).

A DNA-binding region (H-T-H motif) is located at residues 28-47 (VREIARRFRITPRGAQLHLV). Residues S119 and K156 each act as for autocatalytic cleavage activity in the active site.

It belongs to the peptidase S24 family. Homodimer.

It carries out the reaction Hydrolysis of Ala-|-Gly bond in repressor LexA.. Represses a number of genes involved in the response to DNA damage (SOS response), including recA and lexA. In the presence of single-stranded DNA, RecA interacts with LexA causing an autocatalytic cleavage which disrupts the DNA-binding part of LexA, leading to derepression of the SOS regulon and eventually DNA repair. The polypeptide is LexA repressor (Thermotoga neapolitana (strain ATCC 49049 / DSM 4359 / NBRC 107923 / NS-E)).